A 132-amino-acid chain; its full sequence is MDVTRLLLATLLVFLCFFTAYSHLPPEEKLRDDRSLRSNSSVNLLDFPSVSIVALNKKSKQMSRKEAEKKRSSKKEASMKKVARPRTPLSAPCVATRDSCKPPAPACCDPCASCQCRFFRSACSCRVLSLNC.

Residues 1-22 (MDVTRLLLATLLVFLCFFTAYS) form the signal peptide. Asn-39 carries N-linked (GlcNAc...) asparagine glycosylation. Positions 58–88 (KSKQMSRKEAEKKRSSKKEASMKKVARPRTP) are disordered. The span at 63 to 79 (SRKEAEKKRSSKKEASM) shows a compositional bias: basic and acidic residues. 5 disulfides stabilise this stretch: Cys-93–Cys-108, Cys-100–Cys-114, Cys-107–Cys-125, Cys-111–Cys-132, and Cys-116–Cys-123. An Agouti domain is found at 93–132 (CVATRDSCKPPAPACCDPCASCQCRFFRSACSCRVLSLNC).

The protein resides in the secreted. Functionally, involved in the regulation of melanogenesis. The binding of ASP to MC1R precludes alpha-MSH initiated signaling and thus blocks production of cAMP, leading to a down-regulation of eumelanogenesis (brown/black pigment) and thus increasing synthesis of pheomelanin (yellow/red pigment). The sequence is that of Agouti-signaling protein (ASIP) from Cercopithecus mitis (Blue monkey).